The following is a 414-amino-acid chain: CinA-like protein (414 aa).

This sequence belongs to the CinA family.

The chain is CinA-like protein from Akkermansia muciniphila (strain ATCC BAA-835 / DSM 22959 / JCM 33894 / BCRC 81048 / CCUG 64013 / CIP 107961 / Muc).